Reading from the N-terminus, the 422-residue chain is Proline--tRNA ligase (422 aa).

This sequence belongs to the class-II aminoacyl-tRNA synthetase family. ProS type 2 subfamily. Homodimer.

It is found in the cytoplasm. It catalyses the reaction tRNA(Pro) + L-proline + ATP = L-prolyl-tRNA(Pro) + AMP + diphosphate. In terms of biological role, catalyzes the attachment of proline to tRNA(Pro) in a two-step reaction: proline is first activated by ATP to form Pro-AMP and then transferred to the acceptor end of tRNA(Pro). The chain is Proline--tRNA ligase from Wolbachia sp. subsp. Drosophila simulans (strain wRi).